The primary structure comprises 391 residues: MALSLLSYNVSDLCLGKPPLRCLSSSSSSVSDAIAALKSSEDTFLSVWNCNHDDDNNTECECLGKISMADVICHLSKDHDHSLCALNSSVSVLLPKTRSIVLHVQPSCSLIEAIDLIIKGAQNLIVPIHTKPYTKKKQHNDNVSVTTTTHSNGQRFCWITQEDIIQFLLGFIAAFSPLPAMSLSDLGVINSTHTVVAVDYHSSASAVVSAVSNALAVQTSVAVVDGEGDDPFTSLIGEISPMTLTCCDETAAAAVATLSAGDLMAYIDGANPPESLVQIVRNRLEDKGLIGLMSLFDSLSSYSTSSGYSSEEEAPVRTTSYGRSMSSSARMARKSEAIVCNPKSSLMAVMIQAVAHRVNYAWVVEKDGCFVGMVTFVDILKVFRKFLENDM.

CBS domains are found at residues 16–81 and 331–391; these read GKPP…DHDH and MARK…ENDM.

The polypeptide is CBS domain-containing protein CBSX5 (CBSX5) (Arabidopsis thaliana (Mouse-ear cress)).